Reading from the N-terminus, the 148-residue chain is Ribosome maturation factor RimP (148 aa).

Belongs to the RimP family.

The protein localises to the cytoplasm. Functionally, required for maturation of 30S ribosomal subunits. This chain is Ribosome maturation factor RimP, found in Treponema denticola (strain ATCC 35405 / DSM 14222 / CIP 103919 / JCM 8153 / KCTC 15104).